The following is a 235-amino-acid chain: Secretory carrier-associated membrane protein 5 (235 aa).

Over 1–39 the chain is Cytoplasmic; sequence MAEKVNNFPPLPKFIPLKPCFYQDFEADIPPQHLSLTKR. Residues 40-60 form a helical membrane-spanning segment; sequence LYYLWMLNSVTLAVNLVGCLA. At 61–67 the chain is on the extracellular side; the sequence is WLIGGGG. A helical transmembrane segment spans residues 68–88; the sequence is ATNFGLAFLWLILFTPCSYVC. At 89 to 102 the chain is on the cytoplasmic side; it reads WFRPIYKAFKTDSS. A helical transmembrane segment spans residues 103–125; that stretch reads FSFMAFFFTFMAQLVISIIQAVG. Over 126–148 the chain is Extracellular; it reads IPGWGVCGWIATISFFGTNIGSA. The helical transmembrane segment at 149 to 169 threads the bilayer; it reads VVMLIPTVMFTVVAVFSFIAL. Residues 170 to 235 are Cytoplasmic-facing; the sequence is SMVHKFYRGS…TPNYTYSNEM (66 aa).

This sequence belongs to the SCAMP family. SCAMP5 subfamily. As to quaternary structure, interacts (via C-terminal part) with SYT1 and SYT2; interaction with synaptotagmins making a link with the SNARE molecules. Interacts with SLC9A7.

Its subcellular location is the cell membrane. It localises to the golgi apparatus membrane. The protein localises to the golgi apparatus. It is found in the trans-Golgi network membrane. The protein resides in the recycling endosome membrane. Its subcellular location is the cytoplasmic vesicle. It localises to the secretory vesicle. The protein localises to the synaptic vesicle membrane. Required for the calcium-dependent exocytosis of signal sequence-containing cytokines such as CCL5. Probably acts in cooperation with the SNARE machinery. The polypeptide is Secretory carrier-associated membrane protein 5 (Scamp5) (Rattus norvegicus (Rat)).